The chain runs to 361 residues: Alternative oxidase, mitochondrial (361 aa).

The helical transmembrane segment at 155 to 175 threads the bilayer; that stretch reads LIRYVFLESVAGVPGMVAGML. 3 residues coordinate Fe cation: Glu-162, Glu-201, and His-204. Residues 221 to 241 form a helical membrane-spanning segment; the sequence is MILGAQGVFFNSFFLCYLFSP. Positions 252, 253, 309, and 312 each coordinate Fe cation. The disordered stretch occupies residues 320–361; sequence GNLKQDEDPNPFVSEYGKERGEKPGKGIESLKPVGWERDEVI. Over residues 335–345 the composition is skewed to basic and acidic residues; sequence YGKERGEKPGK.

The protein belongs to the alternative oxidase family. The cofactor is Fe cation.

It localises to the mitochondrion inner membrane. In terms of biological role, catalyzes cyanide-resistant oxygen consumption. May increase respiration when the cytochrome respiratory pathway is restricted, or in response to low temperatures. This chain is Alternative oxidase, mitochondrial (aox), found in Botryotinia fuckeliana (Noble rot fungus).